The primary structure comprises 210 residues: Ribosomal RNA large subunit methyltransferase E (210 aa).

Residues G55, W57, D75, D93, and D117 each contribute to the S-adenosyl-L-methionine site. K157 serves as the catalytic Proton acceptor. Residues 175-210 (YRQVKTTKPPSSRKKSSEMYVVGLDFKPKKNKKSKD) form a disordered region.

The protein belongs to the class I-like SAM-binding methyltransferase superfamily. RNA methyltransferase RlmE family.

It localises to the cytoplasm. The catalysed reaction is uridine(2552) in 23S rRNA + S-adenosyl-L-methionine = 2'-O-methyluridine(2552) in 23S rRNA + S-adenosyl-L-homocysteine + H(+). Functionally, specifically methylates the uridine in position 2552 of 23S rRNA at the 2'-O position of the ribose in the fully assembled 50S ribosomal subunit. This is Ribosomal RNA large subunit methyltransferase E from Methanobrevibacter smithii (strain ATCC 35061 / DSM 861 / OCM 144 / PS).